The chain runs to 623 residues: V-type proton ATPase catalytic subunit A (623 aa).

G252–T259 contacts ATP.

Belongs to the ATPase alpha/beta chains family. As to quaternary structure, V-ATPase is a heteromultimeric enzyme composed of a peripheral catalytic V1 complex (main components: subunits A, B, C, D, E, and F) attached to an integral membrane V0 proton pore complex (main component: the proteolipid protein).

The catalysed reaction is ATP + H2O + 4 H(+)(in) = ADP + phosphate + 5 H(+)(out). In terms of biological role, catalytic subunit of the peripheral V1 complex of vacuolar ATPase. V-ATPase vacuolar ATPase is responsible for acidifying a variety of intracellular compartments in eukaryotic cells. The chain is V-type proton ATPase catalytic subunit A from Daucus carota (Wild carrot).